Reading from the N-terminus, the 870-residue chain is Protein translocase subunit SecA (870 aa).

ATP-binding positions include Gln-86, 104–108 (GEGKT), and Asp-499. Positions 854, 856, 865, and 866 each coordinate Zn(2+).

Belongs to the SecA family. As to quaternary structure, monomer and homodimer. Part of the essential Sec protein translocation apparatus which comprises SecA, SecYEG and auxiliary proteins SecDF-YajC and YidC. Requires Zn(2+) as cofactor.

It localises to the cell inner membrane. It is found in the cytoplasm. It carries out the reaction ATP + H2O + cellular proteinSide 1 = ADP + phosphate + cellular proteinSide 2.. Its function is as follows. Part of the Sec protein translocase complex. Interacts with the SecYEG preprotein conducting channel. Has a central role in coupling the hydrolysis of ATP to the transfer of proteins into and across the cell membrane, serving both as a receptor for the preprotein-SecB complex and as an ATP-driven molecular motor driving the stepwise translocation of polypeptide chains across the membrane. This is Protein translocase subunit SecA from Ehrlichia ruminantium (strain Welgevonden).